Consider the following 654-residue polypeptide: Acetyl-coenzyme A synthetase (654 aa).

CoA contacts are provided by residues 196–199 (RGGK) and threonine 316. Residues 392 to 394 (GEP), 416 to 421 (DTWWQT), aspartate 506, and arginine 521 contribute to the ATP site. Serine 529 lines the CoA pocket. Arginine 532 is an ATP binding site. Positions 543 and 548 each coordinate Mg(2+). Lysine 618 bears the N6-acetyllysine mark.

It belongs to the ATP-dependent AMP-binding enzyme family. It depends on Mg(2+) as a cofactor. Acetylated. Deacetylation by the SIR2-homolog deacetylase activates the enzyme.

The enzyme catalyses acetate + ATP + CoA = acetyl-CoA + AMP + diphosphate. Its function is as follows. Catalyzes the conversion of acetate into acetyl-CoA (AcCoA), an essential intermediate at the junction of anabolic and catabolic pathways. AcsA undergoes a two-step reaction. In the first half reaction, AcsA combines acetate with ATP to form acetyl-adenylate (AcAMP) intermediate. In the second half reaction, it can then transfer the acetyl group from AcAMP to the sulfhydryl group of CoA, forming the product AcCoA. The sequence is that of Acetyl-coenzyme A synthetase from Methylobacillus flagellatus (strain ATCC 51484 / DSM 6875 / VKM B-1610 / KT).